The sequence spans 531 residues: MNFVQPVIQWASLAPILIVLGAAVLGVLIEAFAPRRVRRPVQVTLALLAAAGAFGAIAWRWAEVIGGGGGAPSTVVVGQLVEDGPALAAQGIIAILAFVGILVIAERGRRGAPGSEDAFAPQGASVPGSDYEDRARRAGLVQTEVYPLVLFSVGGMLVFPAAGDLLTLFIALEVLSLPLYLLSGLARRRRLLSQEASMKYFLLGAFSSALLLFGIALLYGYSGSVAIGEIHAATQATTGMDGLLVVGLVLLISGLLFKVGAVPFHAWTPDVYQGAPTPITGFMAACTKVAAFGALLRVVYVVAPAMTWDIQPFLWVVAVLTMVVGTVLAIVQTDMKRTLAYSSVAHAGFLLVGVVAMSPEGISSVFFYLLAYGLATIGAFALVALVRERDAEGNVTAEASHLAQWAGLGRRSPVVATVFALYLLSFAGIPLTSGFVGKFVAFAAAIDGGAWPLVVVGVLASAAAAFFYVRIIVLMFFTSPAEEAGAPSTTVVRSQGFTAVAVALTAAATLVLGVWPTPVLDLLAQATKFVV.

A run of 13 helical transmembrane segments spans residues L13–A33, L45–I65, P85–A105, L150–I170, Y200–G220, G242–V262, V289–D309, I310–I330, L339–P359, V365–L385, V415–F435, A460–P480, and G496–P516.

This sequence belongs to the complex I subunit 2 family. In terms of assembly, NDH-1 is composed of 14 different subunits. Subunits NuoA, H, J, K, L, M, N constitute the membrane sector of the complex.

It is found in the cell membrane. The enzyme catalyses a quinone + NADH + 5 H(+)(in) = a quinol + NAD(+) + 4 H(+)(out). In terms of biological role, NDH-1 shuttles electrons from NADH, via FMN and iron-sulfur (Fe-S) centers, to quinones in the respiratory chain. The immediate electron acceptor for the enzyme in this species is believed to be a menaquinone. Couples the redox reaction to proton translocation (for every two electrons transferred, four hydrogen ions are translocated across the cytoplasmic membrane), and thus conserves the redox energy in a proton gradient. The sequence is that of NADH-quinone oxidoreductase subunit N from Beutenbergia cavernae (strain ATCC BAA-8 / DSM 12333 / CCUG 43141 / JCM 11478 / NBRC 16432 / NCIMB 13614 / HKI 0122).